We begin with the raw amino-acid sequence, 153 residues long: Cytochrome c-type biogenesis protein CcmE (153 aa).

The Cytoplasmic segment spans residues 1–6; that stretch reads MNARRR. Residues 7–27 traverse the membrane as a helical; Signal-anchor for type II membrane protein segment; the sequence is LWSLLMLILAVGTAATLTIMA. Topologically, residues 28–153 are periplasmic; sequence LRRNLTYLYM…LDTPIAQTTP (126 aa). Heme is bound by residues His-121 and Tyr-125. Positions 130 to 141 are enriched in polar residues; sequence LTNKMQPTPTQH. Residues 130 to 153 form a disordered region; sequence LTNKMQPTPTQHTHLDTPIAQTTP.

This sequence belongs to the CcmE/CycJ family.

It is found in the cell inner membrane. Its function is as follows. Heme chaperone required for the biogenesis of c-type cytochromes. Transiently binds heme delivered by CcmC and transfers the heme to apo-cytochromes in a process facilitated by CcmF and CcmH. The polypeptide is Cytochrome c-type biogenesis protein CcmE (Xylella fastidiosa (strain 9a5c)).